A 274-amino-acid chain; its full sequence is 2,3,4,5-tetrahydropyridine-2,6-dicarboxylate N-succinyltransferase (274 aa).

Substrate contacts are provided by arginine 104 and aspartate 141.

It belongs to the transferase hexapeptide repeat family. In terms of assembly, homotrimer.

The protein localises to the cytoplasm. The enzyme catalyses (S)-2,3,4,5-tetrahydrodipicolinate + succinyl-CoA + H2O = (S)-2-succinylamino-6-oxoheptanedioate + CoA. The protein operates within amino-acid biosynthesis; L-lysine biosynthesis via DAP pathway; LL-2,6-diaminopimelate from (S)-tetrahydrodipicolinate (succinylase route): step 1/3. The sequence is that of 2,3,4,5-tetrahydropyridine-2,6-dicarboxylate N-succinyltransferase from Enterobacter sp. (strain 638).